Here is a 140-residue protein sequence, read N- to C-terminus: Pro-Viral epidermal growth factor (140 aa).

The N-terminal stretch at 1-18 is a signal peptide; that stretch reads MSMKYLMLLFAAMIIRSF. The Extracellular portion of the chain corresponds to 19 to 100; sequence ADSGNAIETT…SENPNTTTSY (82 aa). Asparagine 34 is a glycosylation site (N-linked (GlcNAc...) asparagine; by host). The EGF-like domain maps to 41-81; that stretch reads AIRLCGPEGDGYCLHGDCIHARDIDGMYCRCSHGYTGIRCQ. Cystine bridges form between cysteine 45–cysteine 58, cysteine 53–cysteine 69, and cysteine 71–cysteine 80. Residue asparagine 95 is glycosylated (N-linked (GlcNAc...) asparagine; by host). Residues 101-121 traverse the membrane as a helical segment; the sequence is IPSPGIMLVLVGIIIITCCLL. Residues 122-140 lie on the Cytoplasmic side of the membrane; that stretch reads SVYRFTRRTKLPIQDMVVP.

It belongs to the orthopoxvirus OPG019 family. As to quaternary structure, viral epidermal growth factor interacts with host EGFR and promotes EGFR dimerization. In terms of processing, cleaved at the cell surface by host ADAM10, thereby releasing the secreted form of VGF.

It is found in the host membrane. It localises to the secreted. In terms of biological role, stimulates cellular proliferation (hyperplasia)and mobility around infected cells to promote rapid and efficient spread of infection. This effect is beneficial for virus replication in vivo, because poxviruses replicate possibly better in proliferating cells than in quiescent cells. Acts by binding host EGFR, inducing its dimerization, autophosphorylation and leading to activation of several cellular pathways regulating cell proliferation or cell survival. The activation by host EGFR of mitogen activated protein kinases (MAPK) and extracellular-signal regulated kinases (ERK) are essential for the positive effect of vaccinia growth factor on poxvirus virulence in vivo. This is Pro-Viral epidermal growth factor (OPG019) from Bos taurus (Bovine).